We begin with the raw amino-acid sequence, 220 residues long: Small ribosomal subunit protein uS2 (220 aa).

The protein belongs to the universal ribosomal protein uS2 family.

This is Small ribosomal subunit protein uS2 from Methanococcus maripaludis (strain C5 / ATCC BAA-1333).